The primary structure comprises 262 residues: 5'-nucleotidase SurE (262 aa).

A divalent metal cation contacts are provided by Asp11, Asp12, Ser43, and Asn101. The segment covering 220-229 (SAGDGPKEWP) has biased composition (basic and acidic residues). The interval 220-246 (SAGDGPKEWPSDVSQIETNSPSLTPIQ) is disordered. Polar residues predominate over residues 231 to 244 (DVSQIETNSPSLTP).

This sequence belongs to the SurE nucleotidase family. A divalent metal cation is required as a cofactor.

Its subcellular location is the cytoplasm. The catalysed reaction is a ribonucleoside 5'-phosphate + H2O = a ribonucleoside + phosphate. Nucleotidase that shows phosphatase activity on nucleoside 5'-monophosphates. This chain is 5'-nucleotidase SurE, found in Prochlorococcus marinus (strain SARG / CCMP1375 / SS120).